Reading from the N-terminus, the 24-residue chain is Small ribosomal subunit protein uS19 (24 aa).

A disordered region spans residues 1-24 (KLGEFSPTRTYRGHNKKDKKMQKK). A compositionally biased stretch (basic residues) spans 11–24 (YRGHNKKDKKMQKK).

The protein belongs to the universal ribosomal protein uS19 family.

In terms of biological role, protein S19 forms a complex with S13 that binds strongly to the 16S ribosomal RNA. The chain is Small ribosomal subunit protein uS19 from Phytoplasma sp. (strain STRAWB2).